The primary structure comprises 427 residues: Gamma-glutamyl phosphate reductase (427 aa).

This sequence belongs to the gamma-glutamyl phosphate reductase family.

The protein resides in the cytoplasm. The catalysed reaction is L-glutamate 5-semialdehyde + phosphate + NADP(+) = L-glutamyl 5-phosphate + NADPH + H(+). Its pathway is amino-acid biosynthesis; L-proline biosynthesis; L-glutamate 5-semialdehyde from L-glutamate: step 2/2. Functionally, catalyzes the NADPH-dependent reduction of L-glutamate 5-phosphate into L-glutamate 5-semialdehyde and phosphate. The product spontaneously undergoes cyclization to form 1-pyrroline-5-carboxylate. The chain is Gamma-glutamyl phosphate reductase from Rhizobium etli (strain CIAT 652).